The following is a 110-amino-acid chain: Nitrogenase-stabilizing/protective protein NifW (110 aa).

The protein belongs to the NifW family. Homotrimer; associates with NifD.

Functionally, may protect the nitrogenase Fe-Mo protein from oxidative damage. In Acidithiobacillus ferrooxidans (strain ATCC 23270 / DSM 14882 / CIP 104768 / NCIMB 8455) (Ferrobacillus ferrooxidans (strain ATCC 23270)), this protein is Nitrogenase-stabilizing/protective protein NifW.